The following is an 818-amino-acid chain: Serine/threonine-protein kinase PTK2/STK2 (818 aa).

Positions N28–L39 are enriched in polar residues. Disordered stretches follow at residues N28–S100 and N117–F177. At T56 the chain carries Phosphothreonine. Over residues S57–A81 the composition is skewed to low complexity. S59 and S80 each carry phosphoserine. A compositionally biased stretch (basic and acidic residues) spans T136 to T160. Residues D255 to F562 form the Protein kinase domain. Residues I261–V269 and K285 each bind ATP. D388 serves as the catalytic Proton acceptor. The segment covering S585–S595 has biased composition (polar residues). Residues S585–V795 form a disordered region. Phosphoserine is present on residues S623 and S632. 2 stretches are compositionally biased toward basic and acidic residues: residues K638–G651 and T659–E685. Residue S694 is modified to Phosphoserine. Position 700 is a phosphothreonine (T700). At S711 the chain carries Phosphoserine. The span at T727–P736 shows a compositional bias: low complexity. Position 737 is a phosphothreonine (T737). Phosphoserine occurs at positions 752, 755, 778, and 781. A compositionally biased stretch (polar residues) spans S755–F767. The span at S768–S789 shows a compositional bias: low complexity.

This sequence belongs to the protein kinase superfamily. Ser/Thr protein kinase family.

The protein localises to the nucleus. It is found in the cytoplasm. The catalysed reaction is L-seryl-[protein] + ATP = O-phospho-L-seryl-[protein] + ADP + H(+). It carries out the reaction L-threonyl-[protein] + ATP = O-phospho-L-threonyl-[protein] + ADP + H(+). Its function is as follows. Essential determinant for high-affinity spermidine transport. Required for the activation of the plasma membrane proton pump PMA1 via phosphorylation of 'Ser-899'. The sequence is that of Serine/threonine-protein kinase PTK2/STK2 (PTK2) from Saccharomyces cerevisiae (strain ATCC 204508 / S288c) (Baker's yeast).